The chain runs to 165 residues: MKYTSYILAFQLCIVLGSLGCYCQDPYVKEAENLKKYFNAGDPDVADNGTLFLDILRNWKEESDRKIMQSQIVSFYFKLFKNFKDDQRIQKSVETIKEDINVKFFNSNKKKRDDFEKLTNYSVTDSNVQRKAVHELIQVMAELSPAAKIGKRKRSQMFRGRRASQ.

The N-terminal stretch at 1–23 is a signal peptide; sequence MKYTSYILAFQLCIVLGSLGCYC. Glutamine 24 carries the pyrrolidone carboxylic acid modification. 2 N-linked (GlcNAc...) asparagine glycosylation sites follow: asparagine 48 and asparagine 120.

The protein belongs to the type II (or gamma) interferon family. As to quaternary structure, homodimer. Interacts with IFNGR1 (via extracellular domain); this interaction promotes IFNGR1 dimerization. As to expression, released primarily from activated T lymphocytes.

Its subcellular location is the secreted. Functionally, type II interferon produced by immune cells such as T-cells and NK cells that plays crucial roles in antimicrobial, antiviral, and antitumor responses by activating effector immune cells and enhancing antigen presentation. Primarily signals through the JAK-STAT pathway after interaction with its receptor IFNGR1 to affect gene regulation. Upon IFNG binding, IFNGR1 intracellular domain opens out to allow association of downstream signaling components JAK2, JAK1 and STAT1, leading to STAT1 activation, nuclear translocation and transcription of IFNG-regulated genes. Many of the induced genes are transcription factors such as IRF1 that are able to further drive regulation of a next wave of transcription. Plays a role in class I antigen presentation pathway by inducing a replacement of catalytic proteasome subunits with immunoproteasome subunits. In turn, increases the quantity, quality, and repertoire of peptides for class I MHC loading. Increases the efficiency of peptide generation also by inducing the expression of activator PA28 that associates with the proteasome and alters its proteolytic cleavage preference. Up-regulates as well MHC II complexes on the cell surface by promoting expression of several key molecules such as cathepsins B/CTSB, H/CTSH, and L/CTSL. Participates in the regulation of hematopoietic stem cells during development and under homeostatic conditions by affecting their development, quiescence, and differentiation. This is Interferon gamma (IFNG) from Macaca fascicularis (Crab-eating macaque).